The sequence spans 378 residues: 4-hydroxy-3-methylbut-2-en-1-yl diphosphate synthase (flavodoxin) (378 aa).

[4Fe-4S] cluster contacts are provided by Cys268, Cys271, Cys303, and Glu310.

This sequence belongs to the IspG family. [4Fe-4S] cluster serves as cofactor.

The enzyme catalyses (2E)-4-hydroxy-3-methylbut-2-enyl diphosphate + oxidized [flavodoxin] + H2O + 2 H(+) = 2-C-methyl-D-erythritol 2,4-cyclic diphosphate + reduced [flavodoxin]. Its pathway is isoprenoid biosynthesis; isopentenyl diphosphate biosynthesis via DXP pathway; isopentenyl diphosphate from 1-deoxy-D-xylulose 5-phosphate: step 5/6. Functionally, converts 2C-methyl-D-erythritol 2,4-cyclodiphosphate (ME-2,4cPP) into 1-hydroxy-2-methyl-2-(E)-butenyl 4-diphosphate. This chain is 4-hydroxy-3-methylbut-2-en-1-yl diphosphate synthase (flavodoxin), found in Corynebacterium efficiens (strain DSM 44549 / YS-314 / AJ 12310 / JCM 11189 / NBRC 100395).